Consider the following 266-residue polypeptide: F-box only protein 50 (266 aa).

Over residues 1–16 (MEKTQDRDTLSGRMEA) the composition is skewed to basic and acidic residues. Residues 1 to 53 (MEKTQDRDTLSGRMEAEGSLNSEELPPHPQSPPPPPSPRSPTSPVTPELPQPN) form a disordered region. Residues 27–41 (PHPQSPPPPPSPRSP) show a composition bias toward pro residues. Phosphoserine occurs at positions 31, 37, 40, and 43. A Phosphothreonine modification is found at T46. In terms of domain architecture, FBA spans 86-264 (LFLERPLYRN…VTDSSVSVQL (179 aa)).

As to expression, strongly expressed in kidney. Weakly expressed in stomach, colon, duodenum and prostate.

The protein resides in the cytoplasm. Promotes cell proliferation. This Mus musculus (Mouse) protein is F-box only protein 50 (Nccrp1).